Reading from the N-terminus, the 95-residue chain is Large ribosomal subunit protein uL23cz/uL23cy (95 aa).

The protein belongs to the universal ribosomal protein uL23 family. In terms of assembly, part of the 50S ribosomal subunit.

The protein localises to the plastid. Its subcellular location is the chloroplast. In terms of biological role, binds to 23S rRNA. This Amborella trichopoda protein is Large ribosomal subunit protein uL23cz/uL23cy (rpl23-A).